Here is a 253-residue protein sequence, read N- to C-terminus: 5'-nucleotidase SurE (253 aa).

Aspartate 8, aspartate 9, serine 40, and asparagine 97 together coordinate a divalent metal cation.

The protein belongs to the SurE nucleotidase family. It depends on a divalent metal cation as a cofactor.

Its subcellular location is the cytoplasm. The enzyme catalyses a ribonucleoside 5'-phosphate + H2O = a ribonucleoside + phosphate. Its function is as follows. Nucleotidase that shows phosphatase activity on nucleoside 5'-monophosphates. The sequence is that of 5'-nucleotidase SurE from Desulforamulus reducens (strain ATCC BAA-1160 / DSM 100696 / MI-1) (Desulfotomaculum reducens).